Consider the following 479-residue polypeptide: Glycogen synthase (479 aa).

Lys-16 serves as a coordination point for ADP-alpha-D-glucose.

It belongs to the glycosyltransferase 1 family. Bacterial/plant glycogen synthase subfamily.

It carries out the reaction [(1-&gt;4)-alpha-D-glucosyl](n) + ADP-alpha-D-glucose = [(1-&gt;4)-alpha-D-glucosyl](n+1) + ADP + H(+). The protein operates within glycan biosynthesis; glycogen biosynthesis. Synthesizes alpha-1,4-glucan chains using ADP-glucose. The protein is Glycogen synthase of Lactiplantibacillus plantarum (strain ATCC BAA-793 / NCIMB 8826 / WCFS1) (Lactobacillus plantarum).